Reading from the N-terminus, the 597-residue chain is Probable E3 ubiquitin-protein ligase ARI1 (597 aa).

The TRIAD supradomain stretch occupies residues 119–333 (SQMSCDVCME…IAGHSCGRYQ (215 aa)). 18 residues coordinate Zn(2+): Cys-123, Cys-126, Cys-140, His-142, Cys-145, Cys-148, Cys-167, Cys-172, Cys-214, Cys-220, Cys-236, Cys-238, Cys-243, Cys-246, His-251, Cys-256, Cys-283, and Cys-286. Residues 123–172 (CDVCMEDLPGDHMTRMDCGHCFCNNCWTEHFTVQINEGQSKRIRCMAHQC) form an RING-type 1 zinc finger. The IBR-type zinc-finger motif lies at 194–256 (AKFDRYLLES…LCQAHSPCSC (63 aa)). The segment at 283–311 (CPKCYKPVEKNGGCNLVRCICGQCFCWLC) adopts an RING-type 2; atypical zinc-finger fold. Residue Cys-296 is part of the active site. 6 residues coordinate Zn(2+): Cys-301, Cys-303, Cys-308, Cys-311, His-319, and Cys-329. Residues 536–575 (FQPLDSGTSGVTSRPEQASGSRSSEDTICSSSQKRPKKEG) form a disordered region. The span at 540–568 (DSGTSGVTSRPEQASGSRSSEDTICSSSQ) shows a compositional bias: polar residues.

The protein belongs to the RBR family. Ariadne subfamily. Requires Zn(2+) as cofactor. In terms of tissue distribution, ubiquitous.

The enzyme catalyses [E2 ubiquitin-conjugating enzyme]-S-ubiquitinyl-L-cysteine + [acceptor protein]-L-lysine = [E2 ubiquitin-conjugating enzyme]-L-cysteine + [acceptor protein]-N(6)-ubiquitinyl-L-lysine.. Its pathway is protein modification; protein ubiquitination. Its function is as follows. Might act as an E3 ubiquitin-protein ligase, or as part of E3 complex, which accepts ubiquitin from specific E2 ubiquitin-conjugating enzymes and then transfers it to substrates. The polypeptide is Probable E3 ubiquitin-protein ligase ARI1 (ARI1) (Arabidopsis thaliana (Mouse-ear cress)).